The primary structure comprises 207 residues: Hemin/hemoglobin-binding protein 1 (207 aa).

The N-terminal stretch at 1 to 27 (MKKVLVFAAFIVLFSFSFLSTGLTAQA) is a signal peptide. In terms of domain architecture, NEAT spans 29–148 (LKDGTYSVDY…RFDEGSAKAL (120 aa)). A disordered region spans residues 151 to 178 (AVKSSDNNTTTPATKSDSSNKVTNPKSS). Over residues 154-178 (SSDNNTTTPATKSDSSNKVTNPKSS) the composition is skewed to polar residues. An NPKXZ sorting signal motif is present at residues 174–178 (NPKSS). Serine 177 carries the post-translational modification Murein peptidoglycan amidated serine. A propeptide spans 178 to 207 (SDSSQMFLYGIIFVATGAGLILLKRRAIFK) (removed by sortase B).

The protein localises to the secreted. It is found in the cell wall. In terms of biological role, binds both host hemin and hemoglobin with affinity in the nanomolar range and presumably directs it to membrane transporters. The sequence is that of Hemin/hemoglobin-binding protein 1 from Listeria monocytogenes serovar 1/2a (strain ATCC BAA-679 / EGD-e).